The following is a 445-amino-acid chain: Trigger factor (445 aa).

Residues 162–247 (GDQVTIDAIG…IKAVHTAEPT (86 aa)) form the PPIase FKBP-type domain.

Belongs to the FKBP-type PPIase family. Tig subfamily.

Its subcellular location is the cytoplasm. The enzyme catalyses [protein]-peptidylproline (omega=180) = [protein]-peptidylproline (omega=0). Involved in protein export. Acts as a chaperone by maintaining the newly synthesized protein in an open conformation. Functions as a peptidyl-prolyl cis-trans isomerase. The protein is Trigger factor of Rickettsia akari (strain Hartford).